Reading from the N-terminus, the 268-residue chain is Tryptophan synthase alpha chain (268 aa).

Active-site proton acceptor residues include E49 and D60.

Belongs to the TrpA family. Tetramer of two alpha and two beta chains.

It carries out the reaction (1S,2R)-1-C-(indol-3-yl)glycerol 3-phosphate + L-serine = D-glyceraldehyde 3-phosphate + L-tryptophan + H2O. Its pathway is amino-acid biosynthesis; L-tryptophan biosynthesis; L-tryptophan from chorismate: step 5/5. The alpha subunit is responsible for the aldol cleavage of indoleglycerol phosphate to indole and glyceraldehyde 3-phosphate. This Haemophilus influenzae (strain ATCC 51907 / DSM 11121 / KW20 / Rd) protein is Tryptophan synthase alpha chain.